Reading from the N-terminus, the 211-residue chain is Cyclin-dependent kinase inhibitor 3 (211 aa).

The segment at 1–20 (MKPPISIQASEFDSSDEEPV) is disordered. The segment at 1–34 (MKPPISIQASEFDSSDEEPVDEEQTPIQISWLPL) is interaction with CDK2. Positions 32-200 (LPLSRVNCSQ…FRDKLAAYLS (169 aa)) constitute a Tyrosine-protein phosphatase domain. Catalysis depends on Cys-140, which acts as the Phosphocysteine intermediate.

Belongs to the protein-tyrosine phosphatase family. In terms of assembly, interacts with cyclin-dependent kinases such as CDK1, CDK2 and CDK3. Does not interact with CDK4. Interacts (via C-terminus) with phosphorylated CDK2 (via C-terminal helix). Interacts with MS4A3 (via C-terminus); the interaction enhances CDKN3 enzymatic activity.

Its subcellular location is the cytoplasm. The protein localises to the perinuclear region. The catalysed reaction is O-phospho-L-tyrosyl-[protein] + H2O = L-tyrosyl-[protein] + phosphate. The enzyme catalyses O-phospho-L-seryl-[protein] + H2O = L-seryl-[protein] + phosphate. It carries out the reaction O-phospho-L-threonyl-[protein] + H2O = L-threonyl-[protein] + phosphate. Functionally, may play a role in cell cycle regulation. Dual specificity phosphatase active toward substrates containing either phosphotyrosine or phosphoserine residues. Dephosphorylates CDK2 at 'Thr-160' in a cyclin-dependent manner. The sequence is that of Cyclin-dependent kinase inhibitor 3 from Mus musculus (Mouse).